A 304-amino-acid polypeptide reads, in one-letter code: UDP-3-O-acyl-N-acetylglucosamine deacetylase (304 aa).

Positions 79, 238, and 242 each coordinate Zn(2+). Residue histidine 265 is the Proton donor of the active site.

It belongs to the LpxC family. Zn(2+) is required as a cofactor.

The enzyme catalyses a UDP-3-O-[(3R)-3-hydroxyacyl]-N-acetyl-alpha-D-glucosamine + H2O = a UDP-3-O-[(3R)-3-hydroxyacyl]-alpha-D-glucosamine + acetate. The protein operates within glycolipid biosynthesis; lipid IV(A) biosynthesis; lipid IV(A) from (3R)-3-hydroxytetradecanoyl-[acyl-carrier-protein] and UDP-N-acetyl-alpha-D-glucosamine: step 2/6. Catalyzes the hydrolysis of UDP-3-O-myristoyl-N-acetylglucosamine to form UDP-3-O-myristoylglucosamine and acetate, the committed step in lipid A biosynthesis. The sequence is that of UDP-3-O-acyl-N-acetylglucosamine deacetylase from Chromobacterium violaceum (strain ATCC 12472 / DSM 30191 / JCM 1249 / CCUG 213 / NBRC 12614 / NCIMB 9131 / NCTC 9757 / MK).